The following is a 125-amino-acid chain: Protein ApaG (125 aa).

The ApaG domain occupies 1–125 (MINSPRVCIQ…FRLAVPTLIH (125 aa)).

The sequence is that of Protein ApaG from Salmonella arizonae (strain ATCC BAA-731 / CDC346-86 / RSK2980).